Here is a 301-residue protein sequence, read N- to C-terminus: Mitochondrial carnitine/acylcarnitine carrier protein (301 aa).

N-acetylalanine is present on Ala2. Over 2–12 (ADQPKPISPLK) the chain is Cytoplasmic. 3 Solcar repeats span residues 8–99 (ISPL…GKKL), 108–196 (LSYP…VKNI), and 207–293 (LSVP…AMKF). A helical membrane pass occupies residues 13–31 (NLLAGGFGGVCLVFVGHPL). Residues 32–73 (DTVKVRLQTQPPSLPGQPPMYSGTFDCFRKTLFREGIRGLYR) are Mitochondrial matrix-facing. Residues 74–93 (GMAAPIIGVTPMFAVCFFGF) traverse the membrane as a helical segment. Residues 94–112 (GLGKKLQQKHPEDVLSYPQ) are Cytoplasmic-facing. The chain crosses the membrane as a helical span at residues 113-131 (LFAAGMLSGIFTTGIMTPG). Residues 132 to 170 (ERIKCLLQIQASSGETKYTGTLDCAKKLYQEFGIRGIYK) are Mitochondrial matrix-facing. N6-acetyllysine is present on residues Lys148 and Lys157. At Lys170 the chain carries N6-acetyllysine; alternate. An N6-succinyllysine; alternate modification is found at Lys170. Residues 171–190 (GTVVTLMRDVPASGMYFMTY) traverse the membrane as a helical segment. Residues 191–211 (EWVKNIFTPEGKRVSELSVPR) lie on the Cytoplasmic side of the membrane. The chain crosses the membrane as a helical span at residues 212 to 230 (VLVAGGIAGIFNWAVAIPP). Over 231 to 267 (DVLKSRFQTAPPGKYPNGFRDVLRELIPDEGVTSLYK) the chain is Mitochondrial matrix. Residues 268-287 (GFNAVMIRAFPANAACFLGF) traverse the membrane as a helical segment. Topologically, residues 288-301 (EVAMKFLNWATPNL) are cytoplasmic.

Belongs to the mitochondrial carrier (TC 2.A.29) family.

It is found in the mitochondrion inner membrane. It catalyses the reaction O-acetyl-(R)-carnitine(in) + (R)-carnitine(out) = O-acetyl-(R)-carnitine(out) + (R)-carnitine(in). The enzyme catalyses an O-acyl-(R)-carnitine(in) + (R)-carnitine(out) = an O-acyl-(R)-carnitine(out) + (R)-carnitine(in). The catalysed reaction is O-propanoyl-(R)-carnitine(in) + (R)-carnitine(out) = O-propanoyl-(R)-carnitine(out) + (R)-carnitine(in). It carries out the reaction O-hexadecanoyl-(R)-carnitine(in) + (R)-carnitine(out) = O-hexadecanoyl-(R)-carnitine(out) + (R)-carnitine(in). It catalyses the reaction O-octanoyl-(R)-carnitine(in) + (R)-carnitine(out) = O-octanoyl-(R)-carnitine(out) + (R)-carnitine(in). The enzyme catalyses (R)-carnitine(in) = (R)-carnitine(out). Its function is as follows. Mediates the electroneutral exchange of acylcarnitines (O-acyl-(R)-carnitine or L-acylcarnitine) of different acyl chain lengths (ranging from O-acetyl-(R)-carnitine to long-chain O-acyl-(R)-carnitines) with free carnitine ((R)-carnitine or L-carnitine) across the mitochondrial inner membrane, via a ping-pong mechanism. Key player in the mitochondrial oxidation pathway, it translocates the fatty acids in the form of acylcarnitines into the mitochondrial matrix, where the carnitine palmitoyltransferase 2 (CPT-2) activates them to undergo fatty acid beta-oxidation. Catalyzes the unidirectional transport (uniport) of carnitine at lower rates than the antiport (exchange). This chain is Mitochondrial carnitine/acylcarnitine carrier protein (SLC25A20), found in Macaca fascicularis (Crab-eating macaque).